The sequence spans 192 residues: Signal peptidase complex catalytic subunit SEC11C (192 aa).

Topologically, residues 1 to 28 are cytoplasmic; that stretch reads MVRAGAVGTHLPTSSLDIFGDLRKMNKR. Residues 29 to 48 form a helical; Signal-anchor for type II membrane protein membrane-spanning segment; sequence QLYYQVLNFAMIVSSALMIW. At 49 to 192 the chain is on the lumenal side; it reads KGLIVLTGSE…GAYVLLKRES (144 aa). Residues S68, H108, and D134 each act as charge relay system in the active site. A C-terminal short (CTS) helix region spans residues 177 to 188; that stretch reads ALVAVMGAYVLL.

Belongs to the peptidase S26B family. As to quaternary structure, component of the signal peptidase complex paralog C (SPC-C) composed of a catalytic subunit SEC11C and three accessory subunits SPCS1, SPCS2 and SPCS3. Within the complex, interacts with SPCS2 and SPCS3. The complex induces a local thinning of the ER membrane which is used to measure the length of the signal peptide (SP) h-region of protein substrates. This ensures the selectivity of the complex towards h-regions shorter than 18-20 amino acids. In terms of processing, may undergo processing at the N-terminus.

The protein localises to the endoplasmic reticulum membrane. It carries out the reaction Cleavage of hydrophobic, N-terminal signal or leader sequences from secreted and periplasmic proteins.. Functionally, catalytic component of the signal peptidase complex (SPC) which catalyzes the cleavage of N-terminal signal sequences from nascent proteins as they are translocated into the lumen of the endoplasmic reticulum. Specifically cleaves N-terminal signal peptides that contain a hydrophobic alpha-helix (h-region) shorter than 18-20 amino acids. This chain is Signal peptidase complex catalytic subunit SEC11C (Sec11c), found in Rattus norvegicus (Rat).